Consider the following 530-residue polypeptide: Probable ATP-binding protein YbiT (530 aa).

2 consecutive ABC transporter domains span residues 2-252 (LVSS…ERLL) and 320-526 (LEVE…YLRS). Residues 34–41 (GANGSGKS) and 352–359 (GTNGVGKS) contribute to the ATP site.

The protein belongs to the ABC transporter superfamily. ABCF family. YbiT subfamily.

The protein is Probable ATP-binding protein YbiT (ybiT) of Escherichia coli O157:H7.